The primary structure comprises 190 residues: uncharacterized protein (190 aa).

Disordered stretches follow at residues 1 to 21 and 155 to 190; these read MALRGHPEPQPTNTPLSATVG and PEMGQNESLSEERKGHESKRKSGGRGSPSSHPTQAS. The segment covering 181–190 has biased composition (low complexity); the sequence is SPSSHPTQAS.

This is an uncharacterized protein from Homo sapiens (Human).